Here is a 195-residue protein sequence, read N- to C-terminus: MGVWGKKHLRLTHAPSPTFSHLPPSPQAGEPGIDGISLAVVCAAFIRIHPARRHPARNGSRLACTPTPRPNAGLEVVSSARVAASLPSEGGWTSGAPRSSGLSLPGSAWQPPPLPVLRKPAWPGSPAVKNESKFPNRGSRNFPRRRLPPAPVSGEPPERCKLAREIRWRLWKAHEGWGGGAKRPLGDPAWSGVKR.

The tract at residues 86-158 (LPSEGGWTSG…PAPVSGEPPE (73 aa)) is disordered.

This is an uncharacterized protein from Homo sapiens (Human).